The primary structure comprises 181 residues: Oligoribonuclease (181 aa).

Residues 8 to 171 (LIWIDLEMTG…DDIRESVGEL (164 aa)) form the Exonuclease domain. The active site involves Tyr-129.

Belongs to the oligoribonuclease family.

It is found in the cytoplasm. 3'-to-5' exoribonuclease specific for small oligoribonucleotides. The protein is Oligoribonuclease of Serratia proteamaculans (strain 568).